We begin with the raw amino-acid sequence, 116 residues long: Probable non-functional immunoglobulin kappa variable 3-7 (116 aa).

The signal sequence occupies residues 1–21 (MEAPAQLLFLLLLWLPDTTRE). The framework-1 stretch occupies residues 21–43 (EIVMTQSPPTLSLSPGERVTLSC). Residues 22–116 (IVMTQSPPTL…YYCQQDYNLP (95 aa)) form the Ig-like domain. An intrachain disulfide couples Cys-43 to Cys-109. Positions 44-55 (RASQSVSSSYLT) are complementarity-determining-1. The framework-2 stretch occupies residues 56 to 70 (WYQQKPGQAPRLLIY). Positions 71-77 (GASTRAT) are complementarity-determining-2. Positions 78–109 (SIPARFSGSGSGTDFTLTISSLQPEDFAVYYC) are framework-3. The interval 110–116 (QQDYNLP) is complementarity-determining-3.

In terms of assembly, immunoglobulins are composed of two identical heavy chains and two identical light chains; disulfide-linked.

Its subcellular location is the secreted. The protein localises to the cell membrane. Its function is as follows. Probable non-functional open reading frame (ORF) of V region of the variable domain of immunoglobulin light chains. Non-functional ORF generally cannot participate in the synthesis of a productive immunoglobulin chain due to altered V-(D)-J or switch recombination and/or splicing site (at mRNA level) and/or conserved amino acid change (protein level). Immunoglobulins, also known as antibodies, are membrane-bound or secreted glycoproteins produced by B lymphocytes. In the recognition phase of humoral immunity, the membrane-bound immunoglobulins serve as receptors which, upon binding of a specific antigen, trigger the clonal expansion and differentiation of B lymphocytes into immunoglobulins-secreting plasma cells. Secreted immunoglobulins mediate the effector phase of humoral immunity, which results in the elimination of bound antigens. The antigen binding site is formed by the variable domain of one heavy chain, together with that of its associated light chain. Thus, each immunoglobulin has two antigen binding sites with remarkable affinity for a particular antigen. The variable domains are assembled by a process called V-(D)-J rearrangement and can then be subjected to somatic hypermutations which, after exposure to antigen and selection, allow affinity maturation for a particular antigen. The protein is Probable non-functional immunoglobulin kappa variable 3-7 of Homo sapiens (Human).